The primary structure comprises 486 residues: F-box protein At1g80960 (486 aa).

The F-box domain maps to 49–97 (VDWISKLPDDVLLIILSRLSTEEAIRTSVVSKRWEHVWNQMSHLVFDMR).

The polypeptide is F-box protein At1g80960 (Arabidopsis thaliana (Mouse-ear cress)).